The primary structure comprises 261 residues: Acidic leucine-rich nuclear phosphoprotein 32 family member A (261 aa).

LRR repeat units lie at residues 16 to 37, 39 to 60, 61 to 83, and 84 to 105; these read QITE…TDEY, ALES…PKLP, NLKK…TTSP, and KLQY…KPLE. In terms of domain architecture, LRRCT spans 118-156; the sequence is NDATQVDNYREKIFKMLPSLNFLDGFDCNDEEVQSDGDD. Acidic residues-rich tracts occupy residues 145–185 and 194–229; these read CNDE…EEAN and YNDD…DGDA. The segment at 145–261 is disordered; that stretch reads CNDEEVQSDG…VRGKKRKHDG (117 aa). Positions 238–252 are enriched in basic and acidic residues; that stretch reads AKDKDGEKEADESQV.

This sequence belongs to the ANP32 family. Post-translationally, phosphorylated on serine residues.

It localises to the nucleus. The protein resides in the cytoplasm. Functionally, implicated in a number of cellular processes, including proliferation, differentiation, caspase-dependent and caspase-independent apoptosis, suppression of transformation (tumor suppressor), inhibition of protein phosphatase 2A, regulation of mRNA trafficking and stability, and inhibition of acetyltransferases as part of the INHAT (inhibitor of histone acetyltransferases) complex. This is Acidic leucine-rich nuclear phosphoprotein 32 family member A (Anp32a) from Drosophila melanogaster (Fruit fly).